Reading from the N-terminus, the 227-residue chain is Small ribosomal subunit protein uS3 (227 aa).

Positions 39-107 constitute a KH type-2 domain; sequence VRQLLQKRLK…PVHITIEEVR (69 aa).

Belongs to the universal ribosomal protein uS3 family. As to quaternary structure, part of the 30S ribosomal subunit. Forms a tight complex with proteins S10 and S14.

Binds the lower part of the 30S subunit head. Binds mRNA in the 70S ribosome, positioning it for translation. The protein is Small ribosomal subunit protein uS3 of Coxiella burnetii (strain CbuK_Q154) (Coxiella burnetii (strain Q154)).